The chain runs to 164 residues: MSQKRLSRVIYPGTFDPITNGHLDLIERAAQMFDEVIIAVAASPSKNTLFTLEERVEFARQVTSHLDNVSAKGFSGLLVDFAKAEKANVLIRGLRTTVDFEYEFGLTNMYRRLMPGLESVFLTPAEEHAFISSTLVREVAIHGGNVDEFVPAIVANALHQKKKI.

T14 lines the substrate pocket. Residues T14–F15 and H22 each bind ATP. Substrate is bound by residues K46, L78, and R92. ATP is bound by residues G93–R95, E103, and H128–T134.

This sequence belongs to the bacterial CoaD family. In terms of assembly, homohexamer. Mg(2+) serves as cofactor.

Its subcellular location is the cytoplasm. It catalyses the reaction (R)-4'-phosphopantetheine + ATP + H(+) = 3'-dephospho-CoA + diphosphate. The protein operates within cofactor biosynthesis; coenzyme A biosynthesis; CoA from (R)-pantothenate: step 4/5. Its function is as follows. Reversibly transfers an adenylyl group from ATP to 4'-phosphopantetheine, yielding dephospho-CoA (dPCoA) and pyrophosphate. The protein is Phosphopantetheine adenylyltransferase of Vibrio cholerae serotype O1 (strain ATCC 39541 / Classical Ogawa 395 / O395).